The following is a 155-amino-acid chain: MSQVILDLQLACEDNSGLPEESQFQTWLNAVIPQFQEESEVTIRVVDTAESHSLNLTYRGKDKPTNVLSFPFEVPPGMEMSLLGDLVICRQVVEKEAQEQGKPLEAHWAHMVVHGSLHLLGYDHIEDDEAEEMEALETEIMLALDYEDPYIAEKE.

Zn(2+) contacts are provided by His-114, His-118, and His-124.

The protein belongs to the endoribonuclease YbeY family. Requires Zn(2+) as cofactor.

Its subcellular location is the cytoplasm. Single strand-specific metallo-endoribonuclease involved in late-stage 70S ribosome quality control and in maturation of the 3' terminus of the 16S rRNA. The chain is Endoribonuclease YbeY from Escherichia coli O1:K1 / APEC.